Reading from the N-terminus, the 344-residue chain is Fructose-1,6-bisphosphatase class 1 (344 aa).

Residues E90, D109, L111, and D112 each coordinate Mg(2+). Substrate is bound by residues 112 to 115 (DGSS) and N200. E271 serves as a coordination point for Mg(2+).

It belongs to the FBPase class 1 family. In terms of assembly, homotetramer. Mg(2+) is required as a cofactor.

It localises to the cytoplasm. It carries out the reaction beta-D-fructose 1,6-bisphosphate + H2O = beta-D-fructose 6-phosphate + phosphate. The protein operates within carbohydrate biosynthesis; gluconeogenesis. This chain is Fructose-1,6-bisphosphatase class 1, found in Nitrobacter vulgaris.